Here is a 370-residue protein sequence, read N- to C-terminus: MKFIDEARIEVIAGDGGDGSASMRREKFVPFGGPDGGDGGRGGSVYAVADRNINTLIDYRYSKKHQARNGENGRGSDCYGKGGDDITLRMPVGTIITDMDTGELIADLTEHNQTVRIAEGGAGGLGNLHFKSSTNRAPRQKTDGKPGERRMVRLELKVLADVGLLGMPNAGKSTFISSVSNAKPKIADYPFTTLAPNLGVVRVGPSRSFVIADIPGLIEGAAEGAGLGHQFLRHLQRTGLLLHIVDLAPFDETVDPVAEAKAIVNELRKYDEELFSKPRWLVLNKLDMVPEDEREARVAAFLKDFEWDGPVFEISALTGQGCENLCYAVYDYLAEHSDAQRAAEAEDLAADVRFRGQQQGDANAPVGPQE.

Positions 1-159 (MKFIDEARIE…RMVRLELKVL (159 aa)) constitute an Obg domain. Positions 127-147 (NLHFKSSTNRAPRQKTDGKPG) are disordered. The OBG-type G domain occupies 160 to 334 (ADVGLLGMPN…LCYAVYDYLA (175 aa)). Residues 166–173 (GMPNAGKS), 191–195 (FTTLA), 213–216 (DIPG), 284–287 (NKLD), and 315–317 (SAL) contribute to the GTP site. Positions 173 and 193 each coordinate Mg(2+).

The protein belongs to the TRAFAC class OBG-HflX-like GTPase superfamily. OBG GTPase family. In terms of assembly, monomer. Mg(2+) serves as cofactor.

It is found in the cytoplasm. An essential GTPase which binds GTP, GDP and possibly (p)ppGpp with moderate affinity, with high nucleotide exchange rates and a fairly low GTP hydrolysis rate. Plays a role in control of the cell cycle, stress response, ribosome biogenesis and in those bacteria that undergo differentiation, in morphogenesis control. This chain is GTPase Obg, found in Paraburkholderia phymatum (strain DSM 17167 / CIP 108236 / LMG 21445 / STM815) (Burkholderia phymatum).